A 225-amino-acid chain; its full sequence is Potassium-transporting ATPase KdpC subunit (225 aa).

Residues 18–38 traverse the membrane as a helical segment; that stretch reads ALLVLTVVTGIVYPLVVTGVA. Positions 134–161 are disordered; it reads NSVPGHPVRPEDVPADAVTSSGSGLDPD.

The protein belongs to the KdpC family. The system is composed of three essential subunits: KdpA, KdpB and KdpC.

The protein localises to the cell membrane. Its function is as follows. Part of the high-affinity ATP-driven potassium transport (or Kdp) system, which catalyzes the hydrolysis of ATP coupled with the electrogenic transport of potassium into the cytoplasm. This subunit acts as a catalytic chaperone that increases the ATP-binding affinity of the ATP-hydrolyzing subunit KdpB by the formation of a transient KdpB/KdpC/ATP ternary complex. The polypeptide is Potassium-transporting ATPase KdpC subunit (Streptomyces coelicolor (strain ATCC BAA-471 / A3(2) / M145)).